Consider the following 298-residue polypeptide: Pheromone-regulated membrane protein 9 (298 aa).

At M1–K111 the chain is on the cytoplasmic side. A helical transmembrane segment spans residues A112–N132. Over T133–V137 the chain is Extracellular. Residues A138–F158 form a helical membrane-spanning segment. Residues S159 to F298 lie on the Cytoplasmic side of the membrane. The tract at residues S235–F262 is disordered. A COPII binding region spans residues F297–F298.

Belongs to the DUP/COS family. In terms of assembly, interacts with PRM8. Binds to COPII coated vesicles.

Its subcellular location is the cell membrane. Functionally, may be involved in endoplasmic reticulum exit trafficking of proteins. This is Pheromone-regulated membrane protein 9 (PRM9) from Saccharomyces cerevisiae (strain ATCC 204508 / S288c) (Baker's yeast).